Consider the following 361-residue polypeptide: UDP-3-O-acylglucosamine N-acyltransferase (361 aa).

The Proton acceptor role is filled by histidine 258.

It belongs to the transferase hexapeptide repeat family. LpxD subfamily. As to quaternary structure, homotrimer.

It carries out the reaction a UDP-3-O-[(3R)-3-hydroxyacyl]-alpha-D-glucosamine + a (3R)-hydroxyacyl-[ACP] = a UDP-2-N,3-O-bis[(3R)-3-hydroxyacyl]-alpha-D-glucosamine + holo-[ACP] + H(+). The protein operates within bacterial outer membrane biogenesis; LPS lipid A biosynthesis. Functionally, catalyzes the N-acylation of UDP-3-O-acylglucosamine using 3-hydroxyacyl-ACP as the acyl donor. Is involved in the biosynthesis of lipid A, a phosphorylated glycolipid that anchors the lipopolysaccharide to the outer membrane of the cell. The sequence is that of UDP-3-O-acylglucosamine N-acyltransferase from Nitrobacter hamburgensis (strain DSM 10229 / NCIMB 13809 / X14).